The sequence spans 330 residues: Beta-ketoacyl-[acyl-carrier-protein] synthase III 2 (330 aa).

Residues Cys118 and His246 contribute to the active site. The interval 247–251 (QANLR) is ACP-binding. Asn276 is a catalytic residue.

Belongs to the thiolase-like superfamily. FabH family. Homodimer.

It localises to the cytoplasm. It carries out the reaction malonyl-[ACP] + acetyl-CoA + H(+) = 3-oxobutanoyl-[ACP] + CO2 + CoA. The protein operates within lipid metabolism; fatty acid biosynthesis. Functionally, catalyzes the condensation reaction of fatty acid synthesis by the addition to an acyl acceptor of two carbons from malonyl-ACP. Catalyzes the first condensation reaction which initiates fatty acid synthesis and may therefore play a role in governing the total rate of fatty acid production. Possesses both acetoacetyl-ACP synthase and acetyl transacylase activities. Its substrate specificity determines the biosynthesis of branched-chain and/or straight-chain of fatty acids. The protein is Beta-ketoacyl-[acyl-carrier-protein] synthase III 2 of Streptomyces coelicolor (strain ATCC BAA-471 / A3(2) / M145).